Consider the following 93-residue polypeptide: Small ribosomal subunit protein uS19 (93 aa).

The protein belongs to the universal ribosomal protein uS19 family.

Functionally, protein S19 forms a complex with S13 that binds strongly to the 16S ribosomal RNA. This Ehrlichia ruminantium (strain Welgevonden) protein is Small ribosomal subunit protein uS19.